A 295-amino-acid polypeptide reads, in one-letter code: Ribosomal protein L11 methyltransferase (295 aa).

S-adenosyl-L-methionine is bound by residues threonine 150, glycine 171, aspartate 193, and asparagine 232.

It belongs to the methyltransferase superfamily. PrmA family.

The protein localises to the cytoplasm. The enzyme catalyses L-lysyl-[protein] + 3 S-adenosyl-L-methionine = N(6),N(6),N(6)-trimethyl-L-lysyl-[protein] + 3 S-adenosyl-L-homocysteine + 3 H(+). Its function is as follows. Methylates ribosomal protein L11. This chain is Ribosomal protein L11 methyltransferase, found in Neisseria meningitidis serogroup C / serotype 2a (strain ATCC 700532 / DSM 15464 / FAM18).